The sequence spans 589 residues: Cysteine/serine-rich nuclear protein 1 (589 aa).

Disordered stretches follow at residues 1 to 62 and 309 to 388; these read MTGL…RDFC and FREL…GVDD. 2 stretches are compositionally biased toward low complexity: residues 17-41 and 345-368; these read SSVSSSSSSSGCQSRSCSPSSSVSR and DNSCSSDMTDSSTASSSASGTSEA.

Belongs to the AXUD1 family. Ubiquitous. Most abundantly expressed in lung, placenta, skeletal muscle, pancreas and leukocyte. Frequently down-regulated in lung, kidney, liver and colon cancers compared with their corresponding normal tissues.

Its subcellular location is the nucleus. Functionally, binds to the consensus sequence 5'-AGAGTG-3' and has transcriptional activator activity. May have a tumor-suppressor function. May play a role in apoptosis. The protein is Cysteine/serine-rich nuclear protein 1 (CSRNP1) of Homo sapiens (Human).